Here is a 120-residue protein sequence, read N- to C-terminus: MFLLHEYDIFWAFLIISSIIPILAFLISGVLAPLSEGPEKFSSYESGIEPMGDAWLQFRIRYYMFALVFVVFDVETVFLYPWAMSFDVLGVSVFIEALIFVLIPIVGLVYAWRKGALEWS.

The next 3 helical transmembrane spans lie at 9-29 (IFWAFLIISSIIPILAFLISG), 64-84 (MFALVFVVFDVETVFLYPWAM), and 88-108 (VLGVSVFIEALIFVLIPIVGL).

The protein belongs to the complex I subunit 3 family. In terms of assembly, NDH is composed of at least 16 different subunits, 5 of which are encoded in the nucleus.

The protein resides in the plastid. Its subcellular location is the chloroplast thylakoid membrane. It carries out the reaction a plastoquinone + NADH + (n+1) H(+)(in) = a plastoquinol + NAD(+) + n H(+)(out). It catalyses the reaction a plastoquinone + NADPH + (n+1) H(+)(in) = a plastoquinol + NADP(+) + n H(+)(out). In terms of biological role, NDH shuttles electrons from NAD(P)H:plastoquinone, via FMN and iron-sulfur (Fe-S) centers, to quinones in the photosynthetic chain and possibly in a chloroplast respiratory chain. The immediate electron acceptor for the enzyme in this species is believed to be plastoquinone. Couples the redox reaction to proton translocation, and thus conserves the redox energy in a proton gradient. The sequence is that of NAD(P)H-quinone oxidoreductase subunit 3, chloroplastic from Ceratophyllum demersum (Rigid hornwort).